The following is a 254-amino-acid chain: 3-beta-hydroxysteroid dehydrogenase (254 aa).

NAD(+) contacts are provided by residues 12 to 40 (VTGG…SDIN) and aspartate 61. Serine 139 is a substrate binding site. Catalysis depends on tyrosine 152, which acts as the Proton acceptor. Lysine 156 lines the NAD(+) pocket.

Belongs to the short-chain dehydrogenases/reductases (SDR) family. Homotetramer.

It catalyses the reaction testosterone + NAD(+) = androst-4-ene-3,17-dione + NADH + H(+). It carries out the reaction testosterone + NADP(+) = androst-4-ene-3,17-dione + NADPH + H(+). In Comamonas testosteroni (Pseudomonas testosteroni), this protein is 3-beta-hydroxysteroid dehydrogenase.